Here is a 174-residue protein sequence, read N- to C-terminus: MGKITFYEDRGFQGRCYQCSSDCPNLQPYFSRCNSIRVDSGCWMLYERPNYQGHQYFLRRGDYPDYQQWMGFNDSIRSCCLISDTSSHRLRLYEREDQKGLIAELSEDCPCIQDRFRLSEVRSLHVLEGCWVLYEMPNYRGRQYLLRPQEYRRYQDWGAVDAKAGSLRRVVDLY.

Beta/gamma crystallin 'Greek key' domains follow at residues 2–40 and 41–83; these read GKITFYEDRGFQGRCYQCSSDCPNLQPYFSRCNSIRVDS and GCWM…CLIS. Cysteine 23 is modified (S-methylcysteine). Positions 84-87 are connecting peptide; it reads DTSS. Beta/gamma crystallin 'Greek key' domains lie at 88-128 and 129-171; these read HRLR…HVLE and GCWV…RRVV.

The protein belongs to the beta/gamma-crystallin family.

Crystallins are the dominant structural components of the vertebrate eye lens. This is Gamma-crystallin C (CRYGC) from Bos taurus (Bovine).